The chain runs to 382 residues: Type II secretion system protein L (382 aa).

Residues 1–233 are Cytoplasmic-facing; the sequence is MSGVSALFLP…QQSSQWRRWR (233 aa). A helical transmembrane segment spans residues 234–254; the sequence is PLLGLVGLWLVLQWGFTLVQA. Residues 255–382 are Periplasmic-facing; sequence WQLQREGDRY…TVSARLVIGG (128 aa).

Belongs to the GSP L family. As to quaternary structure, type II secretion system is composed of four main components: the outer membrane complex, the inner membrane complex, the cytoplasmic secretion ATPase and the periplasm-spanning pseudopilus. Forms homodimers. Interacts with XcpZ/GspM. Interacts with XcpR/GspE and XcpS/GspF.

The protein localises to the cell inner membrane. In terms of biological role, inner membrane component of the type II secretion system required for the energy-dependent secretion of extracellular factors such as proteases and toxins from the periplasm. Plays a role in the complex assembly and recruits XcpZ resulting in a stable complex in the inner membrane. Provides thus a link between the energy-providing XcpR protein in the cytoplasm and the rest of the T2SS machinery. The protein is Type II secretion system protein L (xcpY) of Pseudomonas aeruginosa (strain ATCC 15692 / DSM 22644 / CIP 104116 / JCM 14847 / LMG 12228 / 1C / PRS 101 / PAO1).